A 408-amino-acid chain; its full sequence is UPF0761 membrane protein NMC0462 (408 aa).

A run of 6 helical transmembrane segments spans residues 43–63 (LLAL…FPVF), 100–120 (LTAI…RTID), 139–159 (FLVY…GISF), 176–196 (WSGA…LWGL), 210–230 (AFVG…LFTW), and 248–268 (VPFF…GAVL).

The protein belongs to the UPF0761 family.

The protein localises to the cell inner membrane. The sequence is that of UPF0761 membrane protein NMC0462 from Neisseria meningitidis serogroup C / serotype 2a (strain ATCC 700532 / DSM 15464 / FAM18).